The chain runs to 1349 residues: Membrane-associated phosphatidylinositol transfer protein 2 (1349 aa).

The interval 262-344 (EDGEEATELV…RDSDESSDDE (83 aa)) is disordered. Over residues 302–322 (KQWSTSSKSSRSSKRGASPSR) the composition is skewed to low complexity. Residues Ser-337, Ser-341, Ser-368, and Ser-589 each carry the phosphoserine modification. A compositionally biased stretch (gly residues) spans 618–631 (GGGGGSSGGGGSSG). A disordered region spans residues 618–671 (GGGGGSSGGGGSSGGSSLESSRHLSRSNVDIPRSNGTEDPKRQLPRKRSDSSTY). Phosphoserine is present on Ser-644. Residues 653–667 (GTEDPKRQLPRKRSD) show a composition bias toward basic and acidic residues. Ser-700, Ser-701, and Ser-702 each carry phosphoserine. One can recognise a DDHD domain in the interval 715 to 963 (FDFEITDLFL…VSFLLRQVMR (249 aa)). Omega-N-methylarginine is present on Arg-828. Residues 876–900 (LPAPSPTTPGPHPPARKASPGLERA) are disordered. Pro residues predominate over residues 878–888 (APSPTTPGPHP). Phosphoserine is present on Ser-1277. Residues 1296–1326 (TISAQPSGPSHRHERTQSQADGEQRGQRSMS) are disordered.

The protein belongs to the PtdIns transfer protein family. PI transfer class IIA subfamily. As to quaternary structure, interacts with PTK2B via its C-terminus. Interacts with CPNE4 (via VWFA domain). As to expression, highly expressed in brain, heart, ovary, testis and thymus. Detected in small intestine, prostate, pancreas, skeletal muscle, liver, colon and placenta.

The protein localises to the endomembrane system. In terms of biological role, catalyzes the transfer of phosphatidylinositol and phosphatidylcholine between membranes (in vitro). Binds calcium ions. In Homo sapiens (Human), this protein is Membrane-associated phosphatidylinositol transfer protein 2 (PITPNM2).